Reading from the N-terminus, the 202-residue chain is MAEEQEIVDSLSAEVNPDQKVDMEVETATPKAETGDEKREREETEEEENGGESKKQKVGEEEKSGPVKLGPKEFVTSVAMFDYFVKFLHFWPTDLDVNKYEHMVLLDLIKKGHSEPEKKIGGGIKTFQVRTHPMWKSRCFFLVREDDTADDFSFRKCVDQILPLPENMKTPGANGNGHGGGRGGGGGRRGGRGGGRGGRFRR.

Disordered stretches follow at residues 1-69 and 168-202; these read MAEE…PVKL and MKTP…RFRR. N-acetylalanine is present on Ala2. 2 stretches are compositionally biased toward basic and acidic residues: residues 33 to 42 and 51 to 65; these read ETGDEKRERE and GESK…EKSG. The segment covering 174–202 has biased composition (gly residues); the sequence is NGNGHGGGRGGGGGRRGGRGGGRGGRFRR.

In terms of tissue distribution, expressed in leaves, flowers and embryos at globular stage.

Its subcellular location is the nucleus. Functionally, may play a role in ribosome biogenesis and in determining the rate of cell division. Involved in a process essential for nuclear and nucleolar functions. This Arabidopsis thaliana (Mouse-ear cress) protein is Protein EMBRYO DEFECTIVE 514.